The primary structure comprises 396 residues: 1-deoxy-D-xylulose 5-phosphate reductoisomerase (396 aa).

Positions 15, 16, 17, 18, 41, and 130 each coordinate NADPH. Lys-131 is a binding site for 1-deoxy-D-xylulose 5-phosphate. Residue Glu-132 participates in NADPH binding. Asp-155 contacts Mn(2+). 4 residues coordinate 1-deoxy-D-xylulose 5-phosphate: Ser-156, Glu-157, Ser-181, and His-204. Glu-157 contacts Mn(2+). Gly-210 contributes to the NADPH binding site. 1-deoxy-D-xylulose 5-phosphate contacts are provided by Ser-217, Asn-222, Lys-223, and Glu-226. Mn(2+) is bound at residue Glu-226.

It belongs to the DXR family. Requires Mg(2+) as cofactor. Mn(2+) is required as a cofactor.

The catalysed reaction is 2-C-methyl-D-erythritol 4-phosphate + NADP(+) = 1-deoxy-D-xylulose 5-phosphate + NADPH + H(+). The protein operates within isoprenoid biosynthesis; isopentenyl diphosphate biosynthesis via DXP pathway; isopentenyl diphosphate from 1-deoxy-D-xylulose 5-phosphate: step 1/6. Its function is as follows. Catalyzes the NADPH-dependent rearrangement and reduction of 1-deoxy-D-xylulose-5-phosphate (DXP) to 2-C-methyl-D-erythritol 4-phosphate (MEP). In Bifidobacterium longum (strain NCC 2705), this protein is 1-deoxy-D-xylulose 5-phosphate reductoisomerase.